The following is a 447-amino-acid chain: Probable tRNA methyltransferase 9B (447 aa).

Ser212 carries the phosphoserine modification. Disordered stretches follow at residues 274–306 (AWANSTVSQQPSRHPSLDLHAPEPFSTKGPNLD) and 320–348 (WLRTPGTSDNFSGHKGGGSRRKEGGNFLD). The segment covering 276 to 286 (ANSTVSQQPSR) has biased composition (polar residues).

Belongs to the methyltransferase superfamily.

Its function is as follows. May modify wobble uridines in specific arginine and glutamic acid tRNAs. Acts as a tumor suppressor by promoting the expression of LIN9. The polypeptide is Probable tRNA methyltransferase 9B (Trmt9b) (Mus musculus (Mouse)).